The sequence spans 313 residues: Pyrimidine-specific ribonucleoside hydrolase RihB (313 aa).

Residue E11 is the Proton acceptor of the active site. Ca(2+) contacts are provided by E11, D16, and V124. Q227 and H239 together coordinate substrate. A Ca(2+)-binding site is contributed by D240.

The protein belongs to the IUNH family. RihB subfamily. Homotetramer. Ca(2+) serves as cofactor.

It catalyses the reaction a pyrimidine ribonucleoside + H2O = a pyrimidine nucleobase + D-ribose. Hydrolyzes cytidine or uridine to ribose and cytosine or uracil, respectively. Has a clear preference for cytidine over uridine. Strictly specific for ribonucleosides. The protein is Pyrimidine-specific ribonucleoside hydrolase RihB of Shigella flexneri serotype 5b (strain 8401).